We begin with the raw amino-acid sequence, 349 residues long: Two pore potassium channel b (349 aa).

The interval 1–53 (MAALDQQPLLHDGGDQKPPPEGAARRFRRCRTAPSSEPPPTDKDNSSAADAPP) is disordered. The Cytoplasmic segment spans residues 1–66 (MAALDQQPLL…FTGGGRPSFR (66 aa)). A helical transmembrane segment spans residues 67–87 (LVGLLLVAYLLLGTIAFYLAM). Residues 100 to 119 (DALYFCVVTMTTVGYGDLVP) constitute an intramembrane region (pore-forming). The chain crosses the membrane as a helical span at residues 123–143 (AAKLLACAFVFAGVAVVGTFL). The Cytoplasmic segment spans residues 144–180 (SKAADYLVEKQEALLFRALHSHTMVRAMEMNKVRYKL). The chain crosses the membrane as a helical span at residues 181 to 201 (YTAGLLLVAAVASGTVVLWKV). An intramembrane region (pore-forming) is located at residues 208–227 (DAFYCVCATVTTLGYGDRSF). The chain crosses the membrane as a helical span at residues 234–254 (AFAVAWITVSTVVVALFFLYA). At 255–349 (AELYTERRQR…PTPDPPPSLR (95 aa)) the chain is on the cytoplasmic side. EF-hand domains lie at 271–306 (LRRR…ELGK) and 310–345 (EDIS…PDPP). Aspartate 284, aspartate 286, aspartate 288, arginine 290, aspartate 295, aspartate 323, aspartate 325, serine 327, threonine 329, and aspartate 334 together coordinate Ca(2+). The tract at residues 326–349 (HSGTLSPADLAAAQPTPDPPPSLR) is disordered.

It belongs to the two pore domain potassium channel (TC 1.A.1.7) family. As to quaternary structure, homodimer.

It localises to the vacuole membrane. In terms of biological role, highly selective inward-rectifying potassium channel that is specifically located in the tonoplast of protein storage vacuoles. Functions independently of the voltage difference across the membrane. The chain is Two pore potassium channel b (TPKB) from Oryza sativa subsp. japonica (Rice).